The sequence spans 393 residues: UDP-sulfoquinovose synthase (393 aa).

NAD(+) is bound by residues 31 to 35, 74 to 75, R100, and N118; these read DNLST and DI. R100 serves as a coordination point for substrate. Residues T144 and Y182 each coordinate substrate. Residue T144 is part of the active site. NAD(+) is bound by residues Y182 and K186. Residue Y182 is the Proton acceptor of the active site. Residue K186 is part of the active site. Q209 is a substrate binding site. An NAD(+)-binding site is contributed by V212. Substrate contacts are provided by residues 238–241, 253–255, and 326–328; these read VVNR, TVY, and RVE.

It belongs to the NAD(P)-dependent epimerase/dehydratase family. NAD(+) is required as a cofactor.

The catalysed reaction is sulfite + UDP-alpha-D-glucose + H(+) = UDP-alpha-D-6-sulfoquinovose + H2O. Catalyzes the biosynthesis of UDP-sulfoquinovose by the transfer of sulfite to UDP-glucose. Important for the assembly of the S-layer N-glycans. The reaction probably occurs through an NAD(+)-dependent oxidation/dehydration/enolization/sulfite addition process. In vitro, in the absence of sulfite, UDP-D-glucose is converted via UDP-4-keto-D-glucose to UDP-D-glucose-5,6-ene. The chain is UDP-sulfoquinovose synthase from Sulfolobus acidocaldarius (strain ATCC 33909 / DSM 639 / JCM 8929 / NBRC 15157 / NCIMB 11770).